Reading from the N-terminus, the 754-residue chain is Endothelin-converting enzyme 1 (754 aa).

Residues 1 to 52 (MMSTYKRATLDEEDLVDSLSESDVYPNHLQVNFRGPRNGQRCWAARTPVEKR) are Cytoplasmic-facing. Phosphothreonine is present on threonine 9. A helical; Signal-anchor for type II membrane protein transmembrane segment spans residues 53–73 (LVVLVALLAAALVACLAVLGI). The Extracellular segment spans residues 74 to 754 (QYQTRTPSVC…MNPHHKCEVW (681 aa)). The 673-residue stretch at 82 to 754 (VCLSEACISV…MNPHHKCEVW (673 aa)) folds into the Peptidase M13 domain. 5 cysteine pairs are disulfide-bonded: cysteine 83–cysteine 88, cysteine 106–cysteine 739, cysteine 114–cysteine 699, cysteine 169–cysteine 419, and cysteine 628–cysteine 751. Residues asparagine 150, asparagine 171, asparagine 194, asparagine 254, asparagine 300, asparagine 346, asparagine 367, and asparagine 523 are each glycosylated (N-linked (GlcNAc...) asparagine). Histidine 591 is a Zn(2+) binding site. Residue glutamate 592 is part of the active site. Residue histidine 595 coordinates Zn(2+). Residues asparagine 616 and asparagine 635 are each glycosylated (N-linked (GlcNAc...) asparagine). Glutamate 651 is a binding site for Zn(2+). The Proton donor role is filled by aspartate 655.

The protein belongs to the peptidase M13 family. As to quaternary structure, homodimer; disulfide-linked. Interacts with PPP1R16B. Interacts with TSPAN8; this interaction recruits the endothelin converting enzyme ECE1 to tetraspanin-enriched microdomains and positively modulates its enzymatic activity. Requires Zn(2+) as cofactor.

The protein resides in the cell membrane. The catalysed reaction is Hydrolysis of the 21-Trp-|-Val-22 bond in big endothelin to form endothelin 1.. Inhibited by phosphoramidon. Its function is as follows. Converts big endothelin-1 to endothelin-1. The protein is Endothelin-converting enzyme 1 (ECE1) of Bos taurus (Bovine).